The sequence spans 360 residues: Phospho-N-acetylmuramoyl-pentapeptide-transferase (360 aa).

A run of 10 helical transmembrane segments spans residues 25 to 45, 74 to 94, 97 to 117, 134 to 154, 168 to 188, 199 to 219, 236 to 256, 263 to 283, 288 to 308, and 339 to 359; these read RAIL…PWVI, MGGA…SDFG, YVWV…VDDY, YFWQ…TAQA, VALN…VGTS, GLAI…AYLA, AGEL…FLWF, VFMG…VAVI, FVLF…ILQV, and IVRF…TLKF.

It belongs to the glycosyltransferase 4 family. MraY subfamily. It depends on Mg(2+) as a cofactor.

The protein localises to the cell inner membrane. The catalysed reaction is UDP-N-acetyl-alpha-D-muramoyl-L-alanyl-gamma-D-glutamyl-meso-2,6-diaminopimeloyl-D-alanyl-D-alanine + di-trans,octa-cis-undecaprenyl phosphate = di-trans,octa-cis-undecaprenyl diphospho-N-acetyl-alpha-D-muramoyl-L-alanyl-D-glutamyl-meso-2,6-diaminopimeloyl-D-alanyl-D-alanine + UMP. It participates in cell wall biogenesis; peptidoglycan biosynthesis. Catalyzes the initial step of the lipid cycle reactions in the biosynthesis of the cell wall peptidoglycan: transfers peptidoglycan precursor phospho-MurNAc-pentapeptide from UDP-MurNAc-pentapeptide onto the lipid carrier undecaprenyl phosphate, yielding undecaprenyl-pyrophosphoryl-MurNAc-pentapeptide, known as lipid I. This is Phospho-N-acetylmuramoyl-pentapeptide-transferase from Cellvibrio japonicus (strain Ueda107) (Pseudomonas fluorescens subsp. cellulosa).